Here is a 196-residue protein sequence, read N- to C-terminus: Proteasome subunit beta 2 (196 aa).

The propeptide at methionine 1–serine 6 is removed in mature form; by autocatalysis. The active-site Nucleophile is threonine 7.

The protein belongs to the peptidase T1B family. In terms of assembly, the 20S proteasome core is composed of 14 alpha and 14 beta subunits that assemble into four stacked heptameric rings, resulting in a barrel-shaped structure. The two inner rings, each composed of seven catalytic beta subunits, are sandwiched by two outer rings, each composed of seven alpha subunits. The catalytic chamber with the active sites is on the inside of the barrel. Has a gated structure, the ends of the cylinder being occluded by the N-termini of the alpha-subunits. Is capped at one or both ends by the proteasome regulatory ATPase, PAN.

Its subcellular location is the cytoplasm. It carries out the reaction Cleavage of peptide bonds with very broad specificity.. Its activity is regulated as follows. The formation of the proteasomal ATPase PAN-20S proteasome complex, via the docking of the C-termini of PAN into the intersubunit pockets in the alpha-rings, triggers opening of the gate for substrate entry. Interconversion between the open-gate and close-gate conformations leads to a dynamic regulation of the 20S proteasome proteolysis activity. Component of the proteasome core, a large protease complex with broad specificity involved in protein degradation. This is Proteasome subunit beta 2 from Metallosphaera sedula (strain ATCC 51363 / DSM 5348 / JCM 9185 / NBRC 15509 / TH2).